The primary structure comprises 545 residues: Chaperonin GroEL 2 (545 aa).

ATP is bound by residues 29 to 32 (TLGP), 86 to 90 (DGTTT), Gly413, 479 to 481 (NAA), and Asp495.

Belongs to the chaperonin (HSP60) family. In terms of assembly, forms a cylinder of 14 subunits composed of two heptameric rings stacked back-to-back. Interacts with the co-chaperonin GroES.

It localises to the cytoplasm. It catalyses the reaction ATP + H2O + a folded polypeptide = ADP + phosphate + an unfolded polypeptide.. Its function is as follows. Together with its co-chaperonin GroES, plays an essential role in assisting protein folding. The GroEL-GroES system forms a nano-cage that allows encapsulation of the non-native substrate proteins and provides a physical environment optimized to promote and accelerate protein folding. The protein is Chaperonin GroEL 2 of Prochlorococcus marinus (strain MIT 9301).